A 98-amino-acid polypeptide reads, in one-letter code: MKSITVICFLALCTVAITSAYPQEPVLADEARPFANSLFDELPEETYQAAVENFRLKRATCDLLSGFGVGDSACAAHCIARGNRGGYCNSQKVCVCRN.

The first 20 residues, 1–20 (MKSITVICFLALCTVAITSA), serve as a signal peptide directing secretion. Residues 21 to 58 (YPQEPVLADEARPFANSLFDELPEETYQAAVENFRLKR) constitute a propeptide that is removed on maturation. Disulfide bonds link Cys-61–Cys-88, Cys-74–Cys-94, and Cys-78–Cys-96.

It belongs to the invertebrate defensin family. Type 1 subfamily.

It localises to the secreted. Its function is as follows. Antibacterial peptide mostly active against Gram-positive bacteria. This is Defensin-B (DEFB) from Aedes aegypti (Yellowfever mosquito).